The chain runs to 109 residues: SRA stem-loop-interacting RNA-binding protein, mitochondrial (109 aa).

A Phosphoserine modification is found at Ser-15. In terms of domain architecture, RRM spans Pro-19–Asp-103. Position 101 is a phosphothreonine (Thr-101). Phosphoserine is present on Ser-102.

It localises to the mitochondrion. The protein localises to the nucleus. RNA-binding protein that acts as a nuclear receptor corepressor. Probably acts by binding the SRA RNA, and repressing the SRA-mediated nuclear receptor coactivation. Binds the STR7 loop of SRA RNA. Also able to repress glucocorticoid (GR), androgen (AR), thyroid (TR) and VDR-mediated transactivation. This Pongo abelii (Sumatran orangutan) protein is SRA stem-loop-interacting RNA-binding protein, mitochondrial (SLIRP).